We begin with the raw amino-acid sequence, 320 residues long: Methionyl-tRNA formyltransferase (320 aa).

S111–P114 lines the (6S)-5,6,7,8-tetrahydrofolate pocket.

This sequence belongs to the Fmt family.

It carries out the reaction L-methionyl-tRNA(fMet) + (6R)-10-formyltetrahydrofolate = N-formyl-L-methionyl-tRNA(fMet) + (6S)-5,6,7,8-tetrahydrofolate + H(+). In terms of biological role, attaches a formyl group to the free amino group of methionyl-tRNA(fMet). The formyl group appears to play a dual role in the initiator identity of N-formylmethionyl-tRNA by promoting its recognition by IF2 and preventing the misappropriation of this tRNA by the elongation apparatus. The polypeptide is Methionyl-tRNA formyltransferase (Bifidobacterium adolescentis (strain ATCC 15703 / DSM 20083 / NCTC 11814 / E194a)).